The chain runs to 492 residues: Glycylpeptide N-tetradecanoyltransferase 2 (492 aa).

Residues 1–77 (MAEDSESAAS…SASDSQEIKN (77 aa)) are disordered. A compositionally biased stretch (acidic residues) spans 15 to 32 (ELDDQDTCGIDGDNEEEN). Residues 46–57 (KKKKKKQKRKKE) are compositionally biased toward basic residues. The span at 61–72 (SGGTKSDSASDS) shows a compositional bias: polar residues. Tetradecanoyl-CoA is bound by residues histidine 111, tryptophan 116, leucine 244, valine 246, serine 252, arginine 254, valine 255, and alanine 256.

This sequence belongs to the NMT family.

It is found in the cytoplasm. It localises to the membrane. The enzyme catalyses N-terminal glycyl-[protein] + tetradecanoyl-CoA = N-tetradecanoylglycyl-[protein] + CoA + H(+). It catalyses the reaction N-terminal glycyl-L-lysyl-[protein] + tetradecanoyl-CoA = N-terminal glycyl-(N(6)-tetradecanoyl)-L-lysyl-[protein] + CoA + H(+). In terms of biological role, adds a myristoyl group to the N-terminal glycine residue of certain cellular and viral proteins. Also able to mediate N-terminal lysine myristoylation of proteins. This is Glycylpeptide N-tetradecanoyltransferase 2 from Danio rerio (Zebrafish).